Here is a 438-residue protein sequence, read N- to C-terminus: uncharacterized protein (438 aa).

12 consecutive transmembrane segments (helical) span residues V22–G42, S59–F79, I89–A109, M137–G157, F174–F194, L237–K257, H258–V278, A292–T312, M330–S350, F356–I376, S380–V400, and A418–L438.

Belongs to the CitM (TC 2.A.11) transporter family.

The protein resides in the cell membrane. Transports the free citrate anion. This is an uncharacterized protein from Bacillus subtilis (strain 168).